The sequence spans 145 residues: Large ribosomal subunit protein bL35c (145 aa).

The transit peptide at 1 to 56 (MASLSMASVNVSFCHPLRSSSPKVSLRSSVHFATSLSSSHSISGLRAVLPLKISTV) directs the protein to the chloroplast.

Belongs to the bacterial ribosomal protein bL35 family. As to quaternary structure, part of the 50S ribosomal subunit.

It is found in the plastid. The protein resides in the chloroplast. In Arabidopsis thaliana (Mouse-ear cress), this protein is Large ribosomal subunit protein bL35c.